A 181-amino-acid polypeptide reads, in one-letter code: Peptide deformylase 2 (181 aa).

Residues Cys-109 and His-151 each contribute to the Fe cation site. The active site involves Glu-152. Residue His-155 coordinates Fe cation.

This sequence belongs to the polypeptide deformylase family. It depends on Fe(2+) as a cofactor.

It carries out the reaction N-terminal N-formyl-L-methionyl-[peptide] + H2O = N-terminal L-methionyl-[peptide] + formate. Its function is as follows. Removes the formyl group from the N-terminal Met of newly synthesized proteins. Requires at least a dipeptide for an efficient rate of reaction. N-terminal L-methionine is a prerequisite for activity but the enzyme has broad specificity at other positions. This Shewanella oneidensis (strain ATCC 700550 / JCM 31522 / CIP 106686 / LMG 19005 / NCIMB 14063 / MR-1) protein is Peptide deformylase 2.